We begin with the raw amino-acid sequence, 363 residues long: Bonnadiene synthase (363 aa).

Residues D93, D98, N234, S238, and E242 each coordinate Mg(2+).

The protein belongs to the terpene synthase family. The cofactor is Mg(2+).

The catalysed reaction is (2E,6E,10E)-geranylgeranyl diphosphate = bonnadiene + diphosphate. It participates in secondary metabolite biosynthesis; terpenoid biosynthesis. Diterpene synthase that catalyzes the conversion of geranylgeranyl diphosphate (GGPP) to bonnadiene. Cannot use geranyl diphosphate (GPP), farnesyl diphosphate (FPP) and geranylfarnesyl diphosphate (GFPP). This chain is Bonnadiene synthase, found in Allokutzneria albata (Kibdelosporangium albatum).